We begin with the raw amino-acid sequence, 264 residues long: ATP synthase subunit a (264 aa).

6 helical membrane passes run 29–49 (TWHI…LWLF), 89–109 (VIAP…FMDM), 134–154 (DLNI…YYSI), 177–197 (IPVN…SLAL), 208–228 (LIFI…ALGV), and 235–255 (LIFH…LTIV).

The protein belongs to the ATPase A chain family. F-type ATPases have 2 components, CF(1) - the catalytic core - and CF(0) - the membrane proton channel. CF(1) has five subunits: alpha(3), beta(3), gamma(1), delta(1), epsilon(1). CF(0) has three main subunits: a(1), b(2) and c(9-12). The alpha and beta chains form an alternating ring which encloses part of the gamma chain. CF(1) is attached to CF(0) by a central stalk formed by the gamma and epsilon chains, while a peripheral stalk is formed by the delta and b chains.

It is found in the cell inner membrane. Its function is as follows. Key component of the proton channel; it plays a direct role in the translocation of protons across the membrane. This Shewanella sediminis (strain HAW-EB3) protein is ATP synthase subunit a.